We begin with the raw amino-acid sequence, 920 residues long: MRSLTVASRHPGAAFSTRRRPLLHPAAAGRDSTFQRCWRWEKTQDSSFGSSLRTSRLPRTVHGDILKNLLAPTAGAVSVEQAEAIADLPKGDMWSVHKFGGTCMGTSERIHNVADIVLRDPSERKLVVVSAMSKVTDMMYNLVNKAQSRDDSYIAVLDEVFDKHMTTAKDLLAGEDLARFLSQLHADISNLKAMLRAIYIAGHATESFSDFVVGHGELWSAQMLSYAIQKSGTPCSWMDTREVLVVNPSGANQVDPDYLESEKRLEKWFSRCPAETIIATGFIASTPENIPTTLKRDGSDFSAAIIGSLVKARQVTIWTDVDGVFSADPRKVSEAVILSTLSYQEAWEMSYFGANVLHPRTIIPVMKYNIPIVIRNIFNTSAPGTMICQQPANENGDLEACVKAFATIDKLALVNVEGTGMAGVPGTANAIFGAVKDVGANVIMISQASSEHSVCFAVPEKEVALVSAALHARFREALAAGRLSKVEVIHNCSILATVGLRMASTPGVSATLFDALAKANINVRAIAQGCSEYNITIVLKQEDCVRALRAAHSRFFLSKTTLAVGIIGPGLIGRTLLNQLKDQAAVLKENMNIDLRVMGIAGSRTMLLSDIGVDLTQWKEKLQTEAEPANLDKFVHHLSENHFFPNRVLVDCTADTSVASHYYDWLKKGIHVITPNKKANSGPLDRYLKLRTLQRASYTHYFYEATVGAGLPIISTLRGLLETGDKILRIEGIFSGTLSYIFNNFEGARTFSDVVAEAKKAGYTEPDPRDDLSGTDVARKVIILARESGLGLELSDIPVRSLVPEALKSCTSADEYMQKLPSFDEDWARERKNAEAAGEVLRYVGVVDVVSKKGQVELRAYKRDHPFAQLSGSDNIIAFTTSRYKDQPLIVRGPGAGAEVTAGGVFCDILRLSSYLGAPS.

The tract at residues 1 to 21 (MRSLTVASRHPGAAFSTRRRP) is disordered. A chloroplast-targeting transit peptide spans 1-92 (MRSLTVASRH…EAIADLPKGD (92 aa)). The tract at residues 93–341 (MWSVHKFGGT…VSEAVILSTL (249 aa)) is aspartokinase. The tract at residues 342 to 566 (SYQEAWEMSY…LSKTTLAVGI (225 aa)) is interface. 2 ACT domains span residues 416-491 (VEGT…VIHN) and 497-574 (TVGL…LIGR). The homoserine dehydrogenase stretch occupies residues 567–920 (IGPGLIGRTL…RLSSYLGAPS (354 aa)). Isoleucine 572 and alanine 601 together coordinate NAD(+). Isoleucine 572 provides a ligand contact to NADP(+). NADPH is bound at residue isoleucine 572. Residues arginine 604, threonine 653, and lysine 677 each contribute to the NADP(+) site. Threonine 653 contributes to the NAD(+) binding site. Residues threonine 653 and lysine 677 each coordinate NADPH. 4 residues coordinate Na(+): glutamate 704, valine 707, alanine 709, and leucine 711. NADP(+)-binding residues include glycine 762 and glutamate 765. Glutamate 765 and aspartate 776 together coordinate L-homoserine. Lysine 780 acts as the Proton donor in catalysis. Residue glycine 897 participates in NAD(+) binding. Glycine 897 contributes to the NADP(+) binding site. Residue glycine 897 participates in NADPH binding.

In the N-terminal section; belongs to the aspartokinase family. The protein in the C-terminal section; belongs to the homoserine dehydrogenase family. In terms of assembly, homo- or heterodimer. Requires a metal cation as cofactor.

It localises to the plastid. Its subcellular location is the chloroplast. It catalyses the reaction L-homoserine + NADP(+) = L-aspartate 4-semialdehyde + NADPH + H(+). The catalysed reaction is L-homoserine + NAD(+) = L-aspartate 4-semialdehyde + NADH + H(+). It carries out the reaction L-aspartate + ATP = 4-phospho-L-aspartate + ADP. Its pathway is amino-acid biosynthesis; L-lysine biosynthesis via DAP pathway; (S)-tetrahydrodipicolinate from L-aspartate: step 1/4. The protein operates within amino-acid biosynthesis; L-methionine biosynthesis via de novo pathway; L-homoserine from L-aspartate: step 1/3. It functions in the pathway amino-acid biosynthesis; L-methionine biosynthesis via de novo pathway; L-homoserine from L-aspartate: step 3/3. It participates in amino-acid biosynthesis; L-threonine biosynthesis; L-threonine from L-aspartate: step 1/5. Its pathway is amino-acid biosynthesis; L-threonine biosynthesis; L-threonine from L-aspartate: step 3/5. Its function is as follows. Bifunctional aspartate kinase and homoserine dehydrogenase that catalyzes the first and the third steps toward the synthesis of lysine, methionine and threonine from aspartate. The sequence is that of Bifunctional aspartokinase/homoserine dehydrogenase 1, chloroplastic (AKHSDH1) from Zea mays (Maize).